The primary structure comprises 398 residues: MNKKKLGIRLLSLLALGGFVLANPVFADQNFARNEKEAKDSAITFIQKSAAIKAGARSAEDIKLDKVNLGGELSGSNMYVYNISTGGFVIVSGDKRSPEILGYSTSGSFDANGKENIASFMESYVEQIKENKKLDTTYAGTAEIKQPVVKSLLDSKGIHYNQGNPYNLLTPVIEKVKPGEQSFVGQHAATGCVATATAQIMKYHNYPNKGLKDYTYTLSSNNPYFNHPKNLFAAISTRQYNWNNILPTYSGRESNVQKMAISELMADVGISVDMDYGPSSGSAGSSRVQRALKENFGYNQSVHQINRSDFSKQDWESQIDKELSQNQPVYYQGVGKVGGHAFVIDGADGRNFYHVNWGWGGVSDGFFRLDALNPSALGTGGGAGGFNGYQSAVVGIKP.

The N-terminal stretch at 1 to 27 is a signal peptide; the sequence is MNKKKLGIRLLSLLALGGFVLANPVFA. Residues 28 to 145 constitute a propeptide that is removed on maturation; sequence DQNFARNEKE…TTYAGTAEIK (118 aa). The active-site Nucleophile is the Cys192. Cys192 carries the post-translational modification Cysteine methyl disulfide; in zymogen form. Residues Ser282 and Gly339 each coordinate a protein. His340 functions as the Proton acceptor in the catalytic mechanism. A C-terminal active site loop region spans residues 368 to 390; that stretch reads RLDALNPSALGTGGGAGGFNGYQ.

The protein belongs to the peptidase C10 family. As to quaternary structure, monomer. In terms of processing, the mature protease is derived from the precursor sequence by cleavage, either in cis via an autocatalytic mechanism, or in trans by mature SpeB or host proteases (trypsin, plasmin or subtilisin). Maturation can involve a number of protein cleavage intermediates. Mature SpeB probably plays the most important role in protein maturation in physiological conditions. Post-translationally, methylthiolation at Cys-192 of the inactive zymogen form is probably involved in the mechanism of secretion of the proteinase into the culture fluid.

Its subcellular location is the secreted. It is found in the host extracellular space. It localises to the host cytoplasm. The enzyme catalyses Preferential cleavage with hydrophobic residues at P2, P1 and P1'.. Synthesized as an inactive zymogen to protect the intracellular components of the bacteria from proteolytic activity during protein production. Once secreted into the extracellular milieu, cleaved into the active protease: maturation can be mediated in cis by autocatalytic cleavage, or in trans by mature SpeB or host proteases. Protease activity is strongly inhibited by zinc and copper, which prevent its maturation into an active protease: inhibition by metal ions may be required to prevent proteolysis of streptococcal proteins. Its function is as follows. Cysteine protease that acts as a key streptococcal virulence factor by cleaving host proteins involved in immune response. Triggers inflammation by mediating cleavage of host proteins, which can both promote host pathogenesis by triggering sterile inflammation and/or restrict streptococcal infection, depending on host immune statue and infection site. Cleaves host gasdermin-A (GSDMA) in epithelial cells, promoting GSDMA activation and formation of gasdermin pores, triggering pyroptosis. Pyroptosis triggers the elimination of the infected skin cell, depriving the pathogen of its protective niche, while inducing an inflammatory response. This ultimately prevents bacterial penetration of the epithelial barrier and a subsequent systemic dissemination of the pathogen. Also mediates cleavage of the cytokine precursor interleukin-1 beta (IL1B) to its mature form, resulting in inflammation and septic shock. SpeB-mediated maturation of IL1B plays a dual role depending on infection site: while IL1B inflammatory response prevents bacterial growth during invasive skin infections, it promotes streptococcal infection of the nasopharynx by disrupting colonization resistance mediated by the microbiota. Inhibits host autophagy be catalyzing cleavage and inactivation of key autophagy factors, such as CALCOCO2, NBR1 and SQSTM1. Cleaves and inhibits a number of complement factors, such as C2, C3-beta chain of C3, C4, C5 or SERPING1, thereby promoting evasion of host immunity. May also impair adaptive immunity by catalyzing cleavage and degradation of host immunoglobulins to promote immune system evasion; the relevance of this activity is however unsure in vivo. Catalyzes maturation and release of the peptide hormone bradykinin from the precursor Kininogen-1 (KNG1) to produce hypotension during septic shock. Also involved in bacterial translocation across the host epithelial barrier by mediating cleavage and degradation of host epithelial junction proteins, such as CDH1 and OCLN. Additionally, has been involved in degradation of fibronectin and vitronectin, two host extracellular matrix proteins involved in tissue integrity. Also able to catalyze cleavage and degradation of streptococcal proteins, such as C5a peptidase, EndoS or SmeZ. Degradation of streptococcal proteins is however strictly regulated to preserve integrity of other virulence factors. The polypeptide is Streptopain (speB) (Streptococcus pyogenes serotype M28 (strain MGAS6180)).